The following is a 185-amino-acid chain: Ribosome-recycling factor (185 aa).

It belongs to the RRF family.

It is found in the cytoplasm. Functionally, responsible for the release of ribosomes from messenger RNA at the termination of protein biosynthesis. May increase the efficiency of translation by recycling ribosomes from one round of translation to another. In Pseudothermotoga lettingae (strain ATCC BAA-301 / DSM 14385 / NBRC 107922 / TMO) (Thermotoga lettingae), this protein is Ribosome-recycling factor.